Here is a 454-residue protein sequence, read N- to C-terminus: Protein disulfide-isomerase TMX3 (454 aa).

The N-terminal stretch at 1-24 (MAAWKSWTALRLCATVVVLDMVVC) is a signal peptide. The 104-residue stretch at 25-128 (KGFVEDLDES…KDDIIEFAHR (104 aa)) folds into the Thioredoxin domain. Residues 25-375 (KGFVEDLDES…TIVSIFKSSP (351 aa)) are Lumenal-facing. Catalysis depends on nucleophile residues cysteine 53 and cysteine 56. Cysteines 53 and 56 form a disulfide. 2 N-linked (GlcNAc...) asparagine glycosylation sites follow: asparagine 258 and asparagine 313. The helical transmembrane segment at 376 to 396 (LMGCFLFGLPLGVISIMCYGI) threads the bilayer. The Cytoplasmic portion of the chain corresponds to 397–454 (YTADTDGGYIEERYEVSKSENENQEQIEESKEQQEPSSGGSVVPTVQEPKDVLEKKKD). The segment at 412–454 (VSKSENENQEQIEESKEQQEPSSGGSVVPTVQEPKDVLEKKKD) is disordered. Over residues 444 to 454 (EPKDVLEKKKD) the composition is skewed to basic and acidic residues. A Di-lysine motif motif is present at residues 451-454 (KKKD).

Belongs to the protein disulfide isomerase family. In terms of processing, N-glycosylated. Widely expressed. Expressed in brain, testis, lung, skin, kidney, uterus, bone, stomach, liver, prostate, placenta, eye and muscle.

The protein localises to the endoplasmic reticulum membrane. It catalyses the reaction Catalyzes the rearrangement of -S-S- bonds in proteins.. Its function is as follows. Probable disulfide isomerase, which participates in the folding of proteins containing disulfide bonds. May act as a dithiol oxidase. Acts as a regulator of endoplasmic reticulum-mitochondria contact sites via its ability to regulate redox signals. The chain is Protein disulfide-isomerase TMX3 (TMX3) from Homo sapiens (Human).